The sequence spans 426 residues: Glutamyl-tRNA reductase (426 aa).

Substrate contacts are provided by residues 51-54, Ser-110, 115-117, and Gln-121; these read TCNR and EAQ. The Nucleophile role is filled by Cys-52. 190–195 is an NADP(+) binding site; sequence GAGEMA.

Belongs to the glutamyl-tRNA reductase family. In terms of assembly, homodimer.

It catalyses the reaction (S)-4-amino-5-oxopentanoate + tRNA(Glu) + NADP(+) = L-glutamyl-tRNA(Glu) + NADPH + H(+). It functions in the pathway porphyrin-containing compound metabolism; protoporphyrin-IX biosynthesis; 5-aminolevulinate from L-glutamyl-tRNA(Glu): step 1/2. Functionally, catalyzes the NADPH-dependent reduction of glutamyl-tRNA(Glu) to glutamate 1-semialdehyde (GSA). The polypeptide is Glutamyl-tRNA reductase (Desulfotalea psychrophila (strain LSv54 / DSM 12343)).